We begin with the raw amino-acid sequence, 679 residues long: UvrABC system protein B (679 aa).

In terms of domain architecture, Helicase ATP-binding spans 25-412 (QGVNSGEEFQ…EGKFIEQVIR (388 aa)). 38 to 45 (GATGTGKT) lines the ATP pocket. The Beta-hairpin signature appears at 91–114 (YYDYYQPEAYVPVSDTYIAKTASI). One can recognise a Helicase C-terminal domain in the interval 429 to 583 (QIDDLLSEIR…KKYNQINGIT (155 aa)). One can recognise a UVR domain in the interval 639 to 674 (PSLIDKLENKMKDAAKELNFEEAANLRDRIKKLRQK).

It belongs to the UvrB family. Forms a heterotetramer with UvrA during the search for lesions. Interacts with UvrC in an incision complex.

It localises to the cytoplasm. Its function is as follows. The UvrABC repair system catalyzes the recognition and processing of DNA lesions. A damage recognition complex composed of 2 UvrA and 2 UvrB subunits scans DNA for abnormalities. Upon binding of the UvrA(2)B(2) complex to a putative damaged site, the DNA wraps around one UvrB monomer. DNA wrap is dependent on ATP binding by UvrB and probably causes local melting of the DNA helix, facilitating insertion of UvrB beta-hairpin between the DNA strands. Then UvrB probes one DNA strand for the presence of a lesion. If a lesion is found the UvrA subunits dissociate and the UvrB-DNA preincision complex is formed. This complex is subsequently bound by UvrC and the second UvrB is released. If no lesion is found, the DNA wraps around the other UvrB subunit that will check the other stand for damage. This is UvrABC system protein B from Prochlorococcus marinus subsp. pastoris (strain CCMP1986 / NIES-2087 / MED4).